A 295-amino-acid chain; its full sequence is Nucleotide-binding protein BPUM_3115 (295 aa).

16–23 (GMSGAGKT) provides a ligand contact to ATP. 67 to 70 (DLRG) is a GTP binding site.

The protein belongs to the RapZ-like family.

In terms of biological role, displays ATPase and GTPase activities. The polypeptide is Nucleotide-binding protein BPUM_3115 (Bacillus pumilus (strain SAFR-032)).